A 132-amino-acid polypeptide reads, in one-letter code: Small ribosomal subunit protein uS8 (132 aa).

It belongs to the universal ribosomal protein uS8 family. Part of the 30S ribosomal subunit. Contacts proteins S5 and S12.

Functionally, one of the primary rRNA binding proteins, it binds directly to 16S rRNA central domain where it helps coordinate assembly of the platform of the 30S subunit. The sequence is that of Small ribosomal subunit protein uS8 from Lactococcus lactis subsp. cremoris (strain MG1363).